The sequence spans 250 residues: Small ribosomal subunit protein uS2 (250 aa).

Belongs to the universal ribosomal protein uS2 family.

This is Small ribosomal subunit protein uS2 from Acidovorax ebreus (strain TPSY) (Diaphorobacter sp. (strain TPSY)).